The primary structure comprises 94 residues: Large ribosomal subunit protein uL24c (94 aa).

It belongs to the universal ribosomal protein uL24 family. As to quaternary structure, part of the 50S ribosomal subunit.

The protein resides in the plastid. The protein localises to the chloroplast. Functionally, one of two assembly initiator proteins, it binds directly to the 5'-end of the 23S rRNA, where it nucleates assembly of the 50S subunit. This Cyanidium caldarium (Red alga) protein is Large ribosomal subunit protein uL24c (rpl24).